The following is a 180-amino-acid chain: Der GTPase-activating protein YihI (180 aa).

Polar residues predominate over residues 1-10 (MKQPARTSQV). 2 disordered regions span residues 1-102 (MKQP…PRLT) and 158-180 (DAED…RTPE). A compositionally biased stretch (basic and acidic residues) spans 21–32 (TREEINQEARDR). The span at 45-54 (SRANPATVSQ) shows a compositional bias: polar residues. Basic and acidic residues predominate over residues 55 to 67 (KGDKSQSVKDPRI). A compositionally biased stretch (low complexity) spans 84–93 (PANPVKAAKP).

Belongs to the YihI family. In terms of assembly, interacts with Der.

Functionally, a GTPase-activating protein (GAP) that modifies Der/EngA GTPase function. May play a role in ribosome biogenesis. This chain is Der GTPase-activating protein YihI, found in Erwinia tasmaniensis (strain DSM 17950 / CFBP 7177 / CIP 109463 / NCPPB 4357 / Et1/99).